A 244-amino-acid polypeptide reads, in one-letter code: 14-3-3 protein beta/alpha-A (244 aa).

Met1 is subject to N-acetylmethionine.

This sequence belongs to the 14-3-3 family. As to quaternary structure, homodimer, and heterodimer with other family members.

It localises to the cytoplasm. Functionally, adapter protein implicated in the regulation of a large spectrum of both general and specialized signaling pathways. Binds to a large number of partners, usually by recognition of a phosphoserine or phosphothreonine motif. Binding generally results in the modulation of the activity of the binding partner. This Xenopus laevis (African clawed frog) protein is 14-3-3 protein beta/alpha-A (ywhab-a).